A 189-amino-acid chain; its full sequence is Elongation factor P (189 aa).

This sequence belongs to the elongation factor P family.

It is found in the cytoplasm. Its pathway is protein biosynthesis; polypeptide chain elongation. Functionally, involved in peptide bond synthesis. Stimulates efficient translation and peptide-bond synthesis on native or reconstituted 70S ribosomes in vitro. Probably functions indirectly by altering the affinity of the ribosome for aminoacyl-tRNA, thus increasing their reactivity as acceptors for peptidyl transferase. The polypeptide is Elongation factor P (Pseudomonas fluorescens (strain Pf0-1)).